Consider the following 264-residue polypeptide: Protein ADMETOS (264 aa).

In terms of tissue distribution, paternally imprinted expression in the endosperm.

Functionally, product of a dosage-sensitive gene that contributes to the maintenance of paternally and maternally imprinted gene expression in the endosperm in order to balance parental contributions. Underlies postzygotic reproductive isolation by promoting triploid seed arrest in a genetic dosage-dependent manner, thus being a component of postzygotic interploidy hybridization barriers. This chain is Protein ADMETOS, found in Arabidopsis thaliana (Mouse-ear cress).